Reading from the N-terminus, the 193-residue chain is Large ribosomal subunit protein uL5 (193 aa).

This sequence belongs to the universal ribosomal protein uL5 family. As to quaternary structure, part of the 50S ribosomal subunit; part of the 5S rRNA/L5/L18/L25 subcomplex. Contacts the 5S rRNA and the P site tRNA. Forms a bridge to the 30S subunit in the 70S ribosome.

Its function is as follows. This is one of the proteins that bind and probably mediate the attachment of the 5S RNA into the large ribosomal subunit, where it forms part of the central protuberance. In the 70S ribosome it contacts protein S13 of the 30S subunit (bridge B1b), connecting the 2 subunits; this bridge is implicated in subunit movement. Contacts the P site tRNA; the 5S rRNA and some of its associated proteins might help stabilize positioning of ribosome-bound tRNAs. The chain is Large ribosomal subunit protein uL5 from Corynebacterium urealyticum (strain ATCC 43042 / DSM 7109).